The following is a 414-amino-acid chain: Probable cell wall biosynthesis protein LcpB (414 aa).

The interval 1-108 is disordered; that stretch reads MDSPGQGEIA…PPVIAGDGGR (108 aa). The Cytoplasmic segment spans residues 1 to 120; that stretch reads MDSPGQGEIA…KAISFKPRGC (120 aa). Positions 9 to 23 are enriched in basic and acidic residues; that stretch reads IARDSQGRPILDRYG. The segment covering 33–42 has biased composition (pro residues); the sequence is RQTPPTPRTP. Low complexity predominate over residues 43–53; that stretch reads PVNETRVYQPR. Residues 54-80 show a composition bias toward pro residues; it reads QTPPRQTPPRQTPPRQMPPRQTPPRQV. The chain crosses the membrane as a helical span at residues 121–141; it reads LGTIAGVLAVGLVLVFVVTLW. Residues 142–414 lie on the Periplasmic side of the membrane; sequence ADSKLNRVDA…GAEALFSSMR (273 aa).

Belongs to the LytR/CpsA/Psr (LCP) family.

The protein resides in the cell inner membrane. The sequence is that of Probable cell wall biosynthesis protein LcpB from Corynebacterium glutamicum (strain ATCC 13032 / DSM 20300 / JCM 1318 / BCRC 11384 / CCUG 27702 / LMG 3730 / NBRC 12168 / NCIMB 10025 / NRRL B-2784 / 534).